The following is a 92-amino-acid chain: Cell division protein FtsB (92 aa).

Residues 1–3 (MKV) lie on the Cytoplasmic side of the membrane. A helical transmembrane segment spans residues 4 to 21 (VPILLFVLLAALQYRLWF). The Periplasmic portion of the chain corresponds to 22–92 (GKNSIPEYVA…TFYRILPSEE (71 aa)). A coiled-coil region spans residues 31 to 74 (AMEKSVAEQAEQNTELLQRNNLLKADIQDLKVGLEAVEERARNE).

The protein belongs to the FtsB family. Part of a complex composed of FtsB, FtsL and FtsQ.

Its subcellular location is the cell inner membrane. Essential cell division protein. May link together the upstream cell division proteins, which are predominantly cytoplasmic, with the downstream cell division proteins, which are predominantly periplasmic. This is Cell division protein FtsB from Pseudoalteromonas atlantica (strain T6c / ATCC BAA-1087).